Here is a 379-residue protein sequence, read N- to C-terminus: Cysteine-rich receptor-like protein kinase 44 (379 aa).

One can recognise a Protein kinase domain in the interval 56–336; the sequence is FSPYNHLGEG…VRMLNANSFT (281 aa). Residues 62–70 and Lys-84 each bind ATP; that span reads LGEGGFGAV. Tyr-129 bears the Phosphotyrosine mark. Asp-181 functions as the Proton acceptor in the catalytic mechanism. Ser-185 is modified (phosphoserine). A Phosphothreonine modification is found at Thr-223. Tyr-231 is modified (phosphotyrosine).

The protein belongs to the protein kinase superfamily. Ser/Thr protein kinase family. CRK subfamily.

It catalyses the reaction L-seryl-[protein] + ATP = O-phospho-L-seryl-[protein] + ADP + H(+). The enzyme catalyses L-threonyl-[protein] + ATP = O-phospho-L-threonyl-[protein] + ADP + H(+). This Arabidopsis thaliana (Mouse-ear cress) protein is Cysteine-rich receptor-like protein kinase 44.